The sequence spans 294 residues: Aquaporin NIP2-2 (294 aa).

2 consecutive transmembrane segments (helical) span residues 54 to 74 and 88 to 108; these read VISE…AASI and SVAG…ISGA. The NPA 1 signature appears at 111–113; that stretch reads NPA. The next 3 membrane-spanning stretches (helical) occupy residues 129–151, 169–189, and 197–217; these read VPFY…KAVL, ALLI…AVAT, and LAGL…GPVS. The short motif at 222–224 is the NPA 2 element; sequence NPA. A helical membrane pass occupies residues 235 to 255; sequence VFTGLWIYFLGPVIGTLSGAW.

The protein belongs to the MIP/aquaporin (TC 1.A.8) family. NIP (TC 1.A.8.12) subfamily.

The protein localises to the membrane. Aquaporins facilitate the transport of water and small neutral solutes across cell membranes. The polypeptide is Aquaporin NIP2-2 (NIP2-2) (Zea mays (Maize)).